We begin with the raw amino-acid sequence, 616 residues long: Chaperone protein HscA (616 aa).

The protein belongs to the heat shock protein 70 family.

In terms of biological role, chaperone involved in the maturation of iron-sulfur cluster-containing proteins. Has a low intrinsic ATPase activity which is markedly stimulated by HscB. Involved in the maturation of IscU. The chain is Chaperone protein HscA from Escherichia coli (strain SMS-3-5 / SECEC).